Reading from the N-terminus, the 931-residue chain is Probable UDP-N-acetylglucosamine--peptide N-acetylglucosaminyltransferase SPINDLY (931 aa).

Residues 1-15 show a composition bias toward basic and acidic residues; sequence MAWTEKDVENGKESE. Residues 1–38 form a disordered region; that stretch reads MAWTEKDVENGKESESLGNNGFLKGGQSSSGSKGSPGR. Residues 25–37 are compositionally biased toward low complexity; the sequence is GGQSSSGSKGSPG. TPR repeat units lie at residues 48 to 81, 82 to 115, 116 to 149, 157 to 190, 191 to 224, 225 to 258, 266 to 299, 300 to 333, 334 to 367, 369 to 401, and 402 to 435; these read DKDAITYANILRSRNKFVDALAIYESVLEKDSKS, IESLIGKGICLQMQNTGRLAFESFSEAIKVDPQN, ACALTHCGILYKDEGRLVEAAESYEKALKADPSY, AIVLTDIGTSLKLAGNTQEGIQKYYEAIKIDSHY, APAYYNLGVVYSEMMQYDMALNCYEKAALERPMY, AEAYCNMGVIFKNRGDLESAIACYERCLAVSPNF, AIALTDLGTKVKLEGDINQGVAYYKKALCYNWHY, ADAMYNLGVAYGEMLKFDMAIVFYELAFHFNPHC, AEACNNLGVIYKDRDNLDKAVECYQLALSIKPNF, QSLNNLGVVYTVQGKMDAAASMIEKAIIANPTY, and AEAYNNLGVLYRDAGNISLAIEAYEQCLKIDPDS. The tract at residues 436-931 is catalytic region; the sequence is RNAGQNRLLA…NHNGNHGNLS (496 aa). Positions 864–884 are enriched in low complexity; it reads QQQQTQTESVVPEESSVNPSE. The segment at 864–931 is disordered; that stretch reads QQQQTQTESV…NHNGNHGNLS (68 aa). Positions 910-931 are enriched in polar residues; sequence KSSTSEENGVQSNHNGNHGNLS.

This sequence belongs to the glycosyltransferase 41 family. O-GlcNAc transferase subfamily.

It localises to the nucleus. It carries out the reaction L-seryl-[protein] + UDP-N-acetyl-alpha-D-glucosamine = 3-O-(N-acetyl-beta-D-glucosaminyl)-L-seryl-[protein] + UDP + H(+). The catalysed reaction is L-threonyl-[protein] + UDP-N-acetyl-alpha-D-glucosamine = 3-O-(N-acetyl-beta-D-glucosaminyl)-L-threonyl-[protein] + UDP + H(+). The protein operates within protein modification; protein glycosylation. In terms of biological role, probable O-linked N-acetylglucosamine transferase (OGT) involved in various processes such as gibberellin (GA) signaling pathway. OGTs catalyze the addition of nucleotide-activated sugars directly onto the polypeptide through O-glycosidic linkage with the hydroxyl of serine or threonine. Probably acts by adding O-linked sugars to yet unknown proteins. This Solanum lycopersicum (Tomato) protein is Probable UDP-N-acetylglucosamine--peptide N-acetylglucosaminyltransferase SPINDLY (SPY).